Consider the following 379-residue polypeptide: Protein trichome birefringence-like 36 (379 aa).

Residues valine 8 to glutamine 24 form a helical; Signal-anchor for type II membrane protein membrane-spanning segment. Residues glycine 123 to serine 125 carry the GDS motif motif. Residues aspartate 353 to asparagine 367 carry the DCXHWCLPGXXDXWN motif motif.

Belongs to the PC-esterase family. TBL subfamily.

Its subcellular location is the membrane. Functionally, may act as a bridging protein that binds pectin and other cell wall polysaccharides. Probably involved in maintaining esterification of pectins. May be involved in the specific O-acetylation of cell wall polymers. The protein is Protein trichome birefringence-like 36 (TBL36) of Arabidopsis thaliana (Mouse-ear cress).